Here is a 1270-residue protein sequence, read N- to C-terminus: DNA-directed RNA polymerase subunit beta (1270 aa).

Belongs to the RNA polymerase beta chain family. As to quaternary structure, the RNAP catalytic core consists of 2 alpha, 1 beta, 1 beta' and 1 omega subunit. When a sigma factor is associated with the core the holoenzyme is formed, which can initiate transcription.

It carries out the reaction RNA(n) + a ribonucleoside 5'-triphosphate = RNA(n+1) + diphosphate. In terms of biological role, DNA-dependent RNA polymerase catalyzes the transcription of DNA into RNA using the four ribonucleoside triphosphates as substrates. In Porphyromonas cangingivalis, this protein is DNA-directed RNA polymerase subunit beta.